The primary structure comprises 414 residues: 2,3-bisphosphoglycerate-independent phosphoglycerate mutase (414 aa).

This sequence belongs to the BPG-independent phosphoglycerate mutase family. A-PGAM subfamily.

The catalysed reaction is (2R)-2-phosphoglycerate = (2R)-3-phosphoglycerate. It participates in carbohydrate degradation; glycolysis; pyruvate from D-glyceraldehyde 3-phosphate: step 3/5. Catalyzes the interconversion of 2-phosphoglycerate and 3-phosphoglycerate. The sequence is that of 2,3-bisphosphoglycerate-independent phosphoglycerate mutase from Saccharolobus islandicus (strain M.14.25 / Kamchatka #1) (Sulfolobus islandicus).